Reading from the N-terminus, the 343-residue chain is Heat-inducible transcription repressor HrcA (343 aa).

It belongs to the HrcA family.

In terms of biological role, negative regulator of class I heat shock genes (grpE-dnaK-dnaJ and groELS operons). Prevents heat-shock induction of these operons. This is Heat-inducible transcription repressor HrcA from Mycobacterium leprae (strain Br4923).